Here is a 245-residue protein sequence, read N- to C-terminus: 1-(5-phosphoribosyl)-5-[(5-phosphoribosylamino)methylideneamino] imidazole-4-carboxamide isomerase (245 aa).

Asp-7 (proton acceptor) is an active-site residue. Asp-129 functions as the Proton donor in the catalytic mechanism.

The protein belongs to the HisA/HisF family.

The protein resides in the cytoplasm. The catalysed reaction is 1-(5-phospho-beta-D-ribosyl)-5-[(5-phospho-beta-D-ribosylamino)methylideneamino]imidazole-4-carboxamide = 5-[(5-phospho-1-deoxy-D-ribulos-1-ylimino)methylamino]-1-(5-phospho-beta-D-ribosyl)imidazole-4-carboxamide. Its pathway is amino-acid biosynthesis; L-histidine biosynthesis; L-histidine from 5-phospho-alpha-D-ribose 1-diphosphate: step 4/9. In Escherichia coli O7:K1 (strain IAI39 / ExPEC), this protein is 1-(5-phosphoribosyl)-5-[(5-phosphoribosylamino)methylideneamino] imidazole-4-carboxamide isomerase.